Consider the following 304-residue polypeptide: Calmodulin-lysine N-methyltransferase (304 aa).

It belongs to the class I-like SAM-binding methyltransferase superfamily. CLNMT methyltransferase family. Monomer. As to expression, expressed in discreet spatial and tissue-specific patterns including root tips, leaves-tips, floral buds, stamens, hydathodes, stigma, anther, siliques, apical meristems and germinating seeds. Also observed at high levels in the root stele region.

Its subcellular location is the cytoplasm. The protein localises to the nucleus. The catalysed reaction is [calmodulin]-L-lysine + S-adenosyl-L-methionine = [calmodulin]-N(6)-methyl-L-lysine + S-adenosyl-L-homocysteine + H(+). Functionally, catalyzes the trimethylation of calmodulin. Regulates roots development probably by modulating auxin signaling responses. May be involved in gravitropism. Involved in abscisic acid (ABA)-mediated and abiotic stress responses, including salt (NaCl), cold, drought and heat stresses. This chain is Calmodulin-lysine N-methyltransferase, found in Arabidopsis thaliana (Mouse-ear cress).